The following is a 567-amino-acid chain: Geraniol synthase, chloroplastic (567 aa).

The transit peptide at 1–63 (MSCARITVTL…GDNSQRKNTR (63 aa)) directs the protein to the chloroplast. Residues 48 to 75 (STPLINGDNSQRKNTRQHMEESSSKRRE) form a disordered region. Over residues 64 to 75 (QHMEESSSKRRE) the composition is skewed to basic and acidic residues. Positions 286, 323, 327, 466, and 469 each coordinate (2E)-geranyl diphosphate. Residues Asp-323 and Asp-327 each coordinate Mn(2+). Positions 323 to 327 (DDIFD) match the DDXXD motif motif. Mn(2+) contacts are provided by Asp-469, Thr-473, and Glu-477.

It belongs to the terpene synthase family. Tpsb subfamily. Homodimer. Mn(2+) serves as cofactor. In terms of tissue distribution, expressed in the peltate glandular trichomes of the leaves.

The protein localises to the plastid. It localises to the chloroplast. It carries out the reaction (2E)-geranyl diphosphate + H2O = (2E)-geraniol + diphosphate. It participates in secondary metabolite biosynthesis; terpenoid biosynthesis. Functionally, monoterpene synthase that catalyzes the formation of geraniol from geranyl diphosphate. The chain is Geraniol synthase, chloroplastic (GES) from Ocimum basilicum (Sweet basil).